The sequence spans 3096 residues: Cilia- and flagella-associated protein 54 (3096 aa).

Over residues 1 to 45 (MAAQGSPSSSPSDDSTTSGSLPELPPTSTATSRSPPESKGSSRSS) the composition is skewed to low complexity. 2 disordered regions span residues 1-46 (MAAQ…RSSL) and 1248-1267 (SNEQ…LKTK).

It belongs to the CFAP54 family.

It is found in the cytoplasm. The protein resides in the cytoskeleton. The protein localises to the cilium axoneme. Its function is as follows. Required for assembly and function of cilia and flagella. The polypeptide is Cilia- and flagella-associated protein 54 (Homo sapiens (Human)).